The following is a 358-amino-acid chain: Nitric oxide synthase oxygenase (358 aa).

C62 is a binding site for heme.

The protein belongs to the NOS family. Bacterial NOS oxygenase subfamily. Homodimer. Heme is required as a cofactor. (6S)-5,6,7,8-tetrahydrofolate serves as cofactor.

The catalysed reaction is 3 reduced [flavodoxin] + 2 L-arginine + 4 O2 = 3 oxidized [flavodoxin] + 2 L-citrulline + 2 nitric oxide + 4 H2O + 5 H(+). Catalyzes the production of nitric oxide. The polypeptide is Nitric oxide synthase oxygenase (nos) (Staphylococcus aureus (strain MRSA252)).